We begin with the raw amino-acid sequence, 452 residues long: Probable cytosolic iron-sulfur protein assembly protein 1 (452 aa).

The segment covering 1-12 (MPPPTTPTPNPS) has biased composition (pro residues). The segment at 1 to 24 (MPPPTTPTPNPSIPQKATLTPLPP) is disordered. 6 WD repeats span residues 70–121 (GHAR…DAAA), 161–200 (GHENEVKSLAFSPGGQYLATSSRDKSVWIWEDVSSGQGGD), 213–267 (EHDG…EWVC), 273–319 (GHGG…FGGV), 340–379 (VHTRDVYSVSWSADTGLVASTGSDGIIAVYAEESAPEDVA), and 411–452 (YEVN…VRIS).

The protein belongs to the WD repeat CIA1 family.

Essential component of the cytosolic iron-sulfur (Fe/S) protein assembly machinery. Required for the maturation of extramitochondrial Fe/S proteins. This is Probable cytosolic iron-sulfur protein assembly protein 1 from Chaetomium globosum (strain ATCC 6205 / CBS 148.51 / DSM 1962 / NBRC 6347 / NRRL 1970) (Soil fungus).